The sequence spans 115 residues: uncharacterized protein (115 aa).

Transmembrane regions (helical) follow at residues 6-26, 43-63, and 84-104; these read ILII…PFMV, ALSC…IHIL, and IFKV…VLVQ.

The protein belongs to the AzlD/HI_1737/HP1330 family.

It is found in the cell membrane. This is an uncharacterized protein from Helicobacter pylori (strain ATCC 700392 / 26695) (Campylobacter pylori).